The primary structure comprises 240 residues: Ubiquinone biosynthesis O-methyltransferase (240 aa).

Positions 36, 60, 81, and 123 each coordinate S-adenosyl-L-methionine.

Belongs to the methyltransferase superfamily. UbiG/COQ3 family.

The enzyme catalyses a 3-demethylubiquinol + S-adenosyl-L-methionine = a ubiquinol + S-adenosyl-L-homocysteine + H(+). The catalysed reaction is a 3-(all-trans-polyprenyl)benzene-1,2-diol + S-adenosyl-L-methionine = a 2-methoxy-6-(all-trans-polyprenyl)phenol + S-adenosyl-L-homocysteine + H(+). It functions in the pathway cofactor biosynthesis; ubiquinone biosynthesis. Its function is as follows. O-methyltransferase that catalyzes the 2 O-methylation steps in the ubiquinone biosynthetic pathway. This Rickettsia bellii (strain OSU 85-389) protein is Ubiquinone biosynthesis O-methyltransferase.